Consider the following 801-residue polypeptide: Putative mRNA-capping enzyme P5 (801 aa).

This sequence belongs to the phytoreovirus protein P5 family.

The protein resides in the virion. It localises to the host cytoplasm. It catalyses the reaction a 5'-end diphospho-ribonucleoside in mRNA + GTP + H(+) = a 5'-end (5'-triphosphoguanosine)-ribonucleoside in mRNA + diphosphate. The protein operates within mRNA processing; mRNA capping. Enzyme involved in mRNA capping (Potential). Binds to GTP and might have guanylyltransferase activity. Together with the RNA-directed RNA polymerase P1 and protein P7, forms an transcriptional complex positioned near the channels situated at each of the five-fold vertices of the core. The chain is Putative mRNA-capping enzyme P5 from Alopecurus aequalis (Barnyard grass).